A 624-amino-acid chain; its full sequence is Chaperone protein HtpG (624 aa).

The segment at 1–336 (MKGQETRGFQ…SNDLPLNVSR (336 aa)) is a; substrate-binding. A b region spans residues 337–552 (EILQDSTVTR…ADEMSTQMAK (216 aa)). Residues 553 to 624 (LFAAAGQSVP…IRRMNQLLVS (72 aa)) are c.

The protein belongs to the heat shock protein 90 family. As to quaternary structure, homodimer.

The protein localises to the cytoplasm. Functionally, molecular chaperone. Has ATPase activity. The sequence is that of Chaperone protein HtpG from Salmonella choleraesuis (strain SC-B67).